Reading from the N-terminus, the 281-residue chain is sn-glycerol-3-phosphate transport system permease protein UgpE (281 aa).

6 helical membrane-spanning segments follow: residues 16–36, 85–105, 113–133, 142–162, 202–222, and 247–267; these read LILG…AATL, FSIT…IVWF, FFWM…FPTV, LNSY…TFLF, ALFV…LLII, and WNQV…IVLA. Residues 77–268 form the ABC transmembrane type-1 domain; it reads MLNSFIMAFS…IPPVVIVLAM (192 aa).

It belongs to the binding-protein-dependent transport system permease family. UgpAE subfamily. The complex is composed of two ATP-binding proteins (UgpC), two transmembrane proteins (UgpA and UgpE) and a solute-binding protein (UgpB).

The protein localises to the cell inner membrane. Its function is as follows. Part of the ABC transporter complex UgpBAEC involved in sn-glycerol-3-phosphate (G3P) import. Probably responsible for the translocation of the substrate across the membrane. The protein is sn-glycerol-3-phosphate transport system permease protein UgpE (ugpE) of Salmonella typhi.